Reading from the N-terminus, the 160-residue chain is Protein max (160 aa).

Over residues 1 to 13 (MSDNDDIEVESDE) the composition is skewed to acidic residues. Residues 1–40 (MSDNDDIEVESDEEQPRFQSAADKRAHHNALERKRRDHIK) form a disordered region. S2 carries the N-acetylserine modification. 2 positions are modified to phosphoserine: S2 and S11. One can recognise a bHLH domain in the interval 23–74 (DKRAHHNALERKRRDHIKDSFHSLRDSVPSLQGEKASRAQILDKATEYIQYM). A compositionally biased stretch (basic and acidic residues) spans 29–40 (NALERKRRDHIK). At K66 the chain carries N6-acetyllysine. The interval 81 to 102 (HQQDIDDLKRQNALLEQQVRAL) is leucine-zipper. Residues 104–160 (KARSSAQLQTNYPSSDNSLYTNAKGGTISAFDGGSDSSSESEPEEPQSRKKLRMEAS) are disordered. A Phosphoserine modification is found at S107. Residues 107–124 (SSAQLQTNYPSSDNSLYT) are compositionally biased toward polar residues. Residues K153 and K154 each carry the N6-acetyllysine modification.

It belongs to the MAX family. In terms of assembly, efficient DNA binding requires dimerization with another bHLH protein. Binds DNA as a heterodimer with MYC or MAD. Part of the E2F6.com-1 complex in G0 phase composed of E2F6, MGA, MAX, TFDP1, CBX3, BAT8, EUHMTASE1, RING1, RNF2, MBLR, L3MBTL2 and YAF2. Component of some MLL1/MLL complex, at least composed of the core components KMT2A/MLL1, ASH2L, HCFC1/HCF1, WDR5 and RBBP5, as well as the facultative components BACC1, CHD8, E2F6, HSP70, INO80C, KANSL1, LAS1L, MAX, MCRS1, MGA, MYST1/MOF, PELP1, PHF20, PRP31, RING2, RUVB1/TIP49A, RUVB2/TIP49B, SENP3, TAF1, TAF4, TAF6, TAF7, TAF9 and TEX10. Interacts with SPAG9. The heterodimer MYC:MAX interacts with ABI1; the interaction may enhance MYC:MAX transcriptional activity. In terms of processing, phosphorylated.

The protein localises to the nucleus. The protein resides in the cell projection. It localises to the dendrite. In terms of biological role, transcription regulator. Forms a sequence-specific DNA-binding protein complex with MYC or MAD which recognizes the core sequence 5'-CAC[GA]TG-3'. The MYC:MAX complex is a transcriptional activator, whereas the MAD:MAX complex is a repressor. CpG methylation of the recognition site greatly inhibits DNA binding, suggesting that DNA methylation may regulate the MYC:MAX complex in vivo. May repress transcription via the recruitment of a chromatin remodeling complex containing H3 'Lys-9' histone methyltransferase activity. Represses MYC transcriptional activity from E-box elements. The protein is Protein max of Mus musculus (Mouse).